The sequence spans 236 residues: Small ribosomal subunit protein uS3 (236 aa).

Residues 39–107 (IRSYVMEELK…ETSLNIVEIR (69 aa)) form the KH type-2 domain. The segment at 214-236 (ASEHRATRNDNSSSSLNRRRESV) is disordered.

Belongs to the universal ribosomal protein uS3 family. In terms of assembly, part of the 30S ribosomal subunit. Forms a tight complex with proteins S10 and S14.

Functionally, binds the lower part of the 30S subunit head. Binds mRNA in the 70S ribosome, positioning it for translation. The sequence is that of Small ribosomal subunit protein uS3 from Bartonella bacilliformis (strain ATCC 35685 / KC583 / Herrer 020/F12,63).